We begin with the raw amino-acid sequence, 477 residues long: E3 ubiquitin-protein ligase TRIM17 (477 aa).

The RING-type zinc finger occupies 16–66 (CSICLDYFTDPVMTTCGHNFCRACIQLSWEKARGKKGRRKRKGSFPCPECR). Residues 94-135 (QKQDLCQEHHEPLKLFCQKDQSPICVVCRESREHRLHRVLPA) form a B box-type zinc finger. Residues cysteine 99, histidine 102, cysteine 121, and histidine 127 each contribute to the Zn(2+) site. Positions 135–223 (AEEAVQGYKL…TASRLRESVA (89 aa)) form a coiled coil. The B30.2/SPRY domain occupies 277-475 (PRTVCRVPGQ…MVISTVTMWV (199 aa)).

Belongs to the TRIM/RBCC family. Interacts (via coiled coil) with TRIM44 (via coiled coil). Interacts with TRIM28; this interaction prevents TRIM28 activity on BCL2A1. Interacts with TRIM41; this interaction prevents TRIM41 activity on ZSCAN2. Interacts with BECN1. Interacts with NFATC3 and NFATC4; these interactions prevent NFATC3 and NFATC4 nuclear localization. In terms of processing, auto-ubiquitinated. Almost exclusively in the testis.

It localises to the cytoplasm. The protein resides in the lysosome. It carries out the reaction S-ubiquitinyl-[E2 ubiquitin-conjugating enzyme]-L-cysteine + [acceptor protein]-L-lysine = [E2 ubiquitin-conjugating enzyme]-L-cysteine + N(6)-ubiquitinyl-[acceptor protein]-L-lysine.. It participates in protein modification; protein ubiquitination. In terms of biological role, E3 ubiquitin ligase that plays important roles in the regulation of neuronal apoptosis, selective autophagy or cell proliferation. Stimulates the degradation of kinetochore ZW10 interacting protein ZWINT in a proteasome-dependent manner, leading to negative regulation of cell proliferation. Inhibits autophagic degradation of diverse known targets while contributing to autophagy of midbodies. Autophagy-inhibitory activity involves MCL1, which TRIM17 assembles into complexes with the key autophagy regulator BECN1. Controls neuronal apoptosis by mediating ubiquitination and degradation of MCL1 to initiate neuronal death. In addition, regulates NFAT transcription factors NFATC3 and NFATC4 activities by preventing their nuclear localization, thus inhibiting their transcriptional activities. Decreases TRIM41-mediated degradation of ZSCAN2 thereby stimulating alpha-synuclein/SNCA transcription in neuronal cells. Prevents the E3 ubiquitin-ligase activity of TRIM28 and its interaction with anti-apoptotic BCL2A1, blocking TRIM28 from ubiquitinating BCL2A1. This chain is E3 ubiquitin-protein ligase TRIM17 (TRIM17), found in Homo sapiens (Human).